A 114-amino-acid chain; its full sequence is FK506-binding protein 1 (114 aa).

The region spanning 26 to 114 (GDLVTIHYTG…IFEVELLKVN (89 aa)) is the PPIase FKBP-type domain.

This sequence belongs to the FKBP-type PPIase family. FKBP1 subfamily.

It is found in the cytoplasm. It catalyses the reaction [protein]-peptidylproline (omega=180) = [protein]-peptidylproline (omega=0). Inhibited by both FK506 and rapamycin. Its function is as follows. PPIases accelerate the folding of proteins. It catalyzes the cis-trans isomerization of proline imidic peptide bonds in oligopeptides. In Eremothecium gossypii (strain ATCC 10895 / CBS 109.51 / FGSC 9923 / NRRL Y-1056) (Yeast), this protein is FK506-binding protein 1 (FPR1).